The primary structure comprises 383 residues: Acetylornithine deacetylase (383 aa).

Position 80 (His-80) interacts with Zn(2+). Residue Asp-82 is part of the active site. Residue Asp-112 coordinates Zn(2+). The active site involves Glu-144. Residues Glu-145, Glu-169, and His-355 each contribute to the Zn(2+) site.

It belongs to the peptidase M20A family. ArgE subfamily. In terms of assembly, homodimer. Zn(2+) serves as cofactor. Co(2+) is required as a cofactor. It depends on glutathione as a cofactor.

It is found in the cytoplasm. The enzyme catalyses N(2)-acetyl-L-ornithine + H2O = L-ornithine + acetate. It functions in the pathway amino-acid biosynthesis; L-arginine biosynthesis; L-ornithine from N(2)-acetyl-L-ornithine (linear): step 1/1. Its function is as follows. Catalyzes the hydrolysis of the amide bond of N(2)-acetylated L-amino acids. Cleaves the acetyl group from N-acetyl-L-ornithine to form L-ornithine, an intermediate in L-arginine biosynthesis pathway, and a branchpoint in the synthesis of polyamines. The sequence is that of Acetylornithine deacetylase from Salmonella arizonae (strain ATCC BAA-731 / CDC346-86 / RSK2980).